A 280-amino-acid polypeptide reads, in one-letter code: 2-dehydro-3-deoxyphosphooctonate aldolase (280 aa).

This sequence belongs to the KdsA family.

It is found in the cytoplasm. It carries out the reaction D-arabinose 5-phosphate + phosphoenolpyruvate + H2O = 3-deoxy-alpha-D-manno-2-octulosonate-8-phosphate + phosphate. Its pathway is carbohydrate biosynthesis; 3-deoxy-D-manno-octulosonate biosynthesis; 3-deoxy-D-manno-octulosonate from D-ribulose 5-phosphate: step 2/3. It participates in bacterial outer membrane biogenesis; lipopolysaccharide biosynthesis. This chain is 2-dehydro-3-deoxyphosphooctonate aldolase, found in Neisseria meningitidis serogroup A / serotype 4A (strain DSM 15465 / Z2491).